Here is a 496-residue protein sequence, read N- to C-terminus: Flotillin-like protein 3 (496 aa).

Residue Cys37 is the site of S-palmitoyl cysteine attachment. The stretch at 301–328 (VVREAELQLEVERKNALRLTEKLKAEKL) forms a coiled coil.

Belongs to the band 7/mec-2 family. Flotillin subfamily. In terms of processing, may be palmitoylated.

It is found in the cell membrane. The protein localises to the membrane. Its subcellular location is the caveola. May act as a scaffolding protein within caveolar membranes, functionally participating in formation of caveolae or caveolae-like vesicles. The protein is Flotillin-like protein 3 (FLOT3) of Oryza sativa subsp. japonica (Rice).